The following is a 457-amino-acid chain: MRTEWVAKRRGQGNVTQMHYARQGVITEEMQYVARRENLPADLIREEVARGRMIIPANINHTNLEPMAIGIASKCKVNANIGASPNSSNLQEEVDKLNLAVKYGADTVMDLSTGGGNLDEIRTAIINASPVPIGTVPVYQALESVHGTIENLTPDDFLHIIEKHAQQGVDYQTIHAGILIEHLPLVRSRITGIVSRGGGILARWMLHHHKQNPLYTHFGDIIEIFKRYDVSFSLGDSLRPGCTHDASDDAQLAELKTLGQLTRKAWEHDVQVMVEGPGHVPMDQIEFNVKKQMEECSEAPFYVLGPLVTDIAPGYDHITSAIGAAMAGWYGTAMLCYVTPKEHLGLPNAEDVRNGLIAYKIAAHAADIARHRPGARDRDDELSKARYNFDWNRQFELSLDPERAKEYHDETLPADIYKTAEFCSMCGPKFCPMQTKVDADALTELEKFLAKEPVTQG.

Residues Asn-80, Met-109, Tyr-139, His-175, 195–197 (SRG), 236–239 (DSLR), and Glu-275 contribute to the substrate site. His-279 lines the Zn(2+) pocket. Tyr-302 contacts substrate. His-343 contributes to the Zn(2+) binding site. [4Fe-4S] cluster contacts are provided by Cys-423, Cys-426, and Cys-431.

This sequence belongs to the ThiC family. The cofactor is [4Fe-4S] cluster.

The catalysed reaction is 5-amino-1-(5-phospho-beta-D-ribosyl)imidazole + S-adenosyl-L-methionine = 4-amino-2-methyl-5-(phosphooxymethyl)pyrimidine + CO + 5'-deoxyadenosine + formate + L-methionine + 3 H(+). The protein operates within cofactor biosynthesis; thiamine diphosphate biosynthesis. Its function is as follows. Catalyzes the synthesis of the hydroxymethylpyrimidine phosphate (HMP-P) moiety of thiamine from aminoimidazole ribotide (AIR) in a radical S-adenosyl-L-methionine (SAM)-dependent reaction. This chain is Phosphomethylpyrimidine synthase, found in Nostoc sp. (strain PCC 7120 / SAG 25.82 / UTEX 2576).